The following is a 978-amino-acid chain: Serine/threonine-protein kinase PLK4 (978 aa).

The Protein kinase domain occupies 13-266; it reads FQVLDLLGKG…LSGILDHPFI (254 aa). Residues 19–27 and Lys42 contribute to the ATP site; that span reads LGKGGFACV. Asp137 serves as the catalytic Proton acceptor. Polar residues-rich tracts occupy residues 271-282 and 291-304; these read LNTKYSSPTRQH and SLDS…TIST. 4 disordered regions span residues 271–381, 489–578, 788–818, and 838–869; these read LNTK…TRTS, IEQP…AERL, AWKN…SSPS, and AQTT…QPIP. Residues 324 to 335 are compositionally biased toward basic and acidic residues; it reads RTSDIWPRDPKH. 2 stretches are compositionally biased toward polar residues: residues 351-362 and 371-381; these read TENVTTGSSSHV and AQYSGLKTRTS. Composition is skewed to basic and acidic residues over residues 518-527 and 536-566; these read GSDSVSKDFD and ESRR…DKSL. Residues 565 to 678 enclose the Cryptic POLO box 1 (CPB1) domain; sequence SLGELTEPLN…AKFVQLVRKL (114 aa). The Cryptic POLO box 2 (CPB2) domain maps to 679-792; the sequence is TPKVTLYSKH…GRRPPAWKNS (114 aa). Polar residues predominate over residues 801–818; the sequence is QQGCSNGQSQPVLPSSPS. Basic residues predominate over residues 848-862; that stretch reads KSRKTSPSKTSRHKQ. The 79-residue stretch at 895 to 973 folds into the POLO box domain; it reads HVCKMAFVDG…LPAVIKTLAT (79 aa).

Belongs to the protein kinase superfamily. Ser/Thr protein kinase family. CDC5/Polo subfamily. Homodimer. In terms of processing, ubiquitinated; leading to its degradation by the proteasome.

Its subcellular location is the cytoplasm. It is found in the cytoskeleton. The protein resides in the microtubule organizing center. It localises to the centrosome. The protein localises to the centriole. It carries out the reaction L-seryl-[protein] + ATP = O-phospho-L-seryl-[protein] + ADP + H(+). It catalyses the reaction L-threonyl-[protein] + ATP = O-phospho-L-threonyl-[protein] + ADP + H(+). Its function is as follows. Serine/threonine-protein kinase that plays a central role in centriole duplication. Able to trigger procentriole formation on the surface of the mother centriole cylinder, leading to the recruitment of centriole biogenesis proteins. When overexpressed, it is able to induce centrosome amplification through the simultaneous generation of multiple procentrioles adjoining each parental centriole during S phase. In Nematostella vectensis (Starlet sea anemone), this protein is Serine/threonine-protein kinase PLK4.